The chain runs to 283 residues: Tyrosine recombinase THA_404 (283 aa).

In terms of domain architecture, Core-binding (CB) spans 1–86 (MDKVIEMFSD…SLNSFFNYLE (86 aa)). Residues 107-281 (KIPDFLTEDE…ADQEKFDAVK (175 aa)) enclose the Tyr recombinase domain. Active-site residues include Arg145, Lys170, His233, Arg236, and His259. Tyr268 functions as the O-(3'-phospho-DNA)-tyrosine intermediate in the catalytic mechanism.

The protein belongs to the 'phage' integrase family.

It localises to the cytoplasm. In terms of biological role, site-specific tyrosine recombinase, which acts by catalyzing the cutting and rejoining of the recombining DNA molecules. This chain is Tyrosine recombinase THA_404, found in Thermosipho africanus (strain TCF52B).